The sequence spans 235 residues: MSKQLIYSGKAKDIYTTEDENLIISTYKDQATAFNGVKKEQIAGKGVLNNQISSFIFEKLNAAGVATHFVEKLSDTEQLNKKVKIIPLEVVLRNYTAGSFSKRFGVDEGIALETPIVEFYYKNDDLDDPFINDEHVKFLQIAGDQQIAYLKEETRRINELLKVWFAEIGLKLIDFKLEFGFDKDGKIILADEFSPDNCRLWDADGNHMDKDVFRRGLGELTDVYEIVWEKLQELK.

It belongs to the SAICAR synthetase family.

It carries out the reaction 5-amino-1-(5-phospho-D-ribosyl)imidazole-4-carboxylate + L-aspartate + ATP = (2S)-2-[5-amino-1-(5-phospho-beta-D-ribosyl)imidazole-4-carboxamido]succinate + ADP + phosphate + 2 H(+). Its pathway is purine metabolism; IMP biosynthesis via de novo pathway; 5-amino-1-(5-phospho-D-ribosyl)imidazole-4-carboxamide from 5-amino-1-(5-phospho-D-ribosyl)imidazole-4-carboxylate: step 1/2. The sequence is that of Phosphoribosylaminoimidazole-succinocarboxamide synthase from Streptococcus pneumoniae (strain 70585).